The primary structure comprises 722 residues: MYRALYAFRSAEPNALAFAAGETFLVLERSSAHWWLAARARSGETGYVPPAYLRRLQGLEQDVLQAIDRAIEAVHNTAMRDGGKYSLEQRGVLQKLIHHRKETLSRRGPSASSVAVMTSSTSDHHLDAAAARQPNGVCRAGFERQHSLPSSEHLGADGGLYQIPLPSSQIPPQPRRAAPTTPPPPVKRRDREALMASGSGGHNTMPSGGNSVSSGSSVSSTSLDTLYTSSSPSEPGSSCSPTPPPVPRRGTHTTVSQVQPPPSKASAPEPPAEEEVATGTTSASDDLEALGTLSLGTTEEKAAAEAAVPRTIGAELMELVRRNTGLSHELCRVAIGIIVGHIQASVPASSPVMEQVLLSLVEGKDLSMALPSGQVCHDQQRLEVIFADLARRKDDAQQRSWALYEDEGVIRCYLEELLHILTDADPEVCKKMCKRNEFESVLALVAYYQMEHRASLRLLLLKCFGAMCSLDAAIISTLVSSVLPVELARDMQTDTQDHQKLCYSALILAMVFSMGEAVPYAHYEHLGTPFAQFLLNIVEDGLPLDTTEQLPDLCVNLLLALNLHLPAADQNVIMAALSKHANVKIFSEKLLLLLNRGDDPVRIFKHEPQPPHSVLKFLQDVFGSPATAAIFYHTDMMALIDITVRHIADLSPGDKLRMEYLSLMHAIVRTTPYLQHRHRLPDLQAILRRILNEEETSPQCQMDRMIVREMCKEFLVLGEAPS.

Residues 1-58 enclose the SH3 domain; it reads MYRALYAFRSAEPNALAFAAGETFLVLERSSAHWWLAARARSGETGYVPPAYLRRLQG. 2 disordered regions span residues 101–122 and 149–286; these read KETLSRRGPSASSVAVMTSSTS and PSSE…ASDD. Residues 110 to 121 are compositionally biased toward low complexity; it reads SASSVAVMTSST. A Phosphoserine modification is found at serine 120. Pro residues predominate over residues 169–185; the sequence is QIPPQPRRAAPTTPPPP. The Nuclear localization signal motif lies at 175 to 192; sequence RRAAPTTPPPPVKRRDRE. A Phosphothreonine modification is found at threonine 181. The span at 206–240 shows a compositional bias: low complexity; it reads PSGGNSVSSGSSVSSTSLDTLYTSSSPSEPGSSCS. A Phosphoserine modification is found at serine 294.

As to quaternary structure, associates with the intermediate filaments, vimentin and desmin. Binds the first and third SH3 domains of NCK. Binds the proline-rich domains of N-WASP through its SH3 domain. Similarly, binds diaphanous protein homolog 1 (DRF1). Binds the SH3 domains of GRB2 through its proline-rich domains. Interacts with Helicobacter pylori toxin vacA. Isoform 4 interacts with FHOD1. Interacts with FASLG. Interacts with TMIGD2. As to expression, highest expression in heart, brain, skeletal muscle, kidney and liver. Lower levels in placenta, lung, small intestine and leukocytes. Weak expression in colon, thymus and spleen.

It localises to the nucleus. Has an important role in stress fiber formation induced by active diaphanous protein homolog 1 (DRF1). Induces microspike formation, in vivo. In vitro, stimulates N-WASP-induced ARP2/3 complex activation in the absence of CDC42. May play an important role in the maintenance of sarcomeres and/or in the assembly of myofibrils into sarcomeres. Implicated in regulation of actin polymerization and cell adhesion. Plays a role in angiogenesis. The protein is NCK-interacting protein with SH3 domain (NCKIPSD) of Homo sapiens (Human).